The sequence spans 100 residues: Small ribosomal subunit protein uS14c (100 aa).

This sequence belongs to the universal ribosomal protein uS14 family. In terms of assembly, part of the 30S ribosomal subunit.

It localises to the plastid. It is found in the chloroplast. In terms of biological role, binds 16S rRNA, required for the assembly of 30S particles. The chain is Small ribosomal subunit protein uS14c from Chlamydomonas reinhardtii (Chlamydomonas smithii).